Reading from the N-terminus, the 208-residue chain is dITP/XTP pyrophosphatase (208 aa).

Residue 16–21 (SNNKGK) coordinates substrate. Catalysis depends on aspartate 79, which acts as the Proton acceptor. Residue aspartate 79 coordinates Mg(2+). Residues serine 80, 166–169 (FGYD), lysine 189, and 194–195 (HR) contribute to the substrate site.

This sequence belongs to the HAM1 NTPase family. Homodimer. It depends on Mg(2+) as a cofactor.

The enzyme catalyses XTP + H2O = XMP + diphosphate + H(+). The catalysed reaction is dITP + H2O = dIMP + diphosphate + H(+). It catalyses the reaction ITP + H2O = IMP + diphosphate + H(+). Functionally, pyrophosphatase that catalyzes the hydrolysis of nucleoside triphosphates to their monophosphate derivatives, with a high preference for the non-canonical purine nucleotides XTP (xanthosine triphosphate), dITP (deoxyinosine triphosphate) and ITP. Seems to function as a house-cleaning enzyme that removes non-canonical purine nucleotides from the nucleotide pool, thus preventing their incorporation into DNA/RNA and avoiding chromosomal lesions. This is dITP/XTP pyrophosphatase from Acinetobacter baumannii (strain AB307-0294).